The chain runs to 204 residues: Large ribosomal subunit protein uL4 (204 aa).

Positions 56–79 are disordered; the sequence is VSGTTAKPYGQKRTGRARQGSLRS.

The protein belongs to the universal ribosomal protein uL4 family. In terms of assembly, part of the 50S ribosomal subunit.

Functionally, one of the primary rRNA binding proteins, this protein initially binds near the 5'-end of the 23S rRNA. It is important during the early stages of 50S assembly. It makes multiple contacts with different domains of the 23S rRNA in the assembled 50S subunit and ribosome. Its function is as follows. Forms part of the polypeptide exit tunnel. The sequence is that of Large ribosomal subunit protein uL4 from Wolbachia pipientis subsp. Culex pipiens (strain wPip).